Reading from the N-terminus, the 262-residue chain is Proline-rich protein 23C (262 aa).

2 disordered regions span residues 1–52 (MGSR…AGTP) and 225–262 (VPSS…LFQE). The segment covering 226-242 (PSSPLQPLPPSPSPGPH) has biased composition (pro residues). Residues 243-252 (ARPELPERPP) show a composition bias toward basic and acidic residues. Basic residues predominate over residues 253–262 (CKVRRRLFQE).

This sequence belongs to the PRR23 family.

The sequence is that of Proline-rich protein 23C (PRR23C) from Homo sapiens (Human).